A 136-amino-acid chain; its full sequence is Putative zinc finger protein 818 (136 aa).

A C2H2-type 1; degenerate zinc finger spans residues 64–83; it reads NVCGKVLSQNSHLVNHQRIH. Residues 89–111 form a C2H2-type 2 zinc finger; sequence YRCHECGKAFTQGSRFINHQIVH.

This sequence belongs to the krueppel C2H2-type zinc-finger protein family.

It localises to the nucleus. May be involved in transcriptional regulation. The chain is Putative zinc finger protein 818 (ZNF818P) from Homo sapiens (Human).